The primary structure comprises 542 residues: CTP synthase (542 aa).

Residues 1–266 (MATNYIFVTG…DDFICQRFHL (266 aa)) form an amidoligase domain region. CTP is bound at residue serine 14. Serine 14 is a UTP binding site. Residues 15–20 (SLGKGI) and aspartate 72 each bind ATP. Residues aspartate 72 and glutamate 140 each contribute to the Mg(2+) site. CTP is bound by residues 147 to 149 (DIE), 187 to 192 (KTKPTQ), and lysine 223. Residues 187–192 (KTKPTQ) and lysine 223 contribute to the UTP site. 239 to 241 (KDV) provides a ligand contact to ATP. The Glutamine amidotransferase type-1 domain maps to 291-542 (VIGMVGKYTE…VKAAKDNQKK (252 aa)). An L-glutamine-binding site is contributed by glycine 352. Residue cysteine 379 is the Nucleophile; for glutamine hydrolysis of the active site. Residues 380–383 (LGMQ), glutamate 403, and arginine 470 contribute to the L-glutamine site. Active-site residues include histidine 515 and glutamate 517.

This sequence belongs to the CTP synthase family. In terms of assembly, homotetramer.

It catalyses the reaction UTP + L-glutamine + ATP + H2O = CTP + L-glutamate + ADP + phosphate + 2 H(+). The catalysed reaction is L-glutamine + H2O = L-glutamate + NH4(+). It carries out the reaction UTP + NH4(+) + ATP = CTP + ADP + phosphate + 2 H(+). It participates in pyrimidine metabolism; CTP biosynthesis via de novo pathway; CTP from UDP: step 2/2. With respect to regulation, allosterically activated by GTP, when glutamine is the substrate; GTP has no effect on the reaction when ammonia is the substrate. The allosteric effector GTP functions by stabilizing the protein conformation that binds the tetrahedral intermediate(s) formed during glutamine hydrolysis. Inhibited by the product CTP, via allosteric rather than competitive inhibition. Its function is as follows. Catalyzes the ATP-dependent amination of UTP to CTP with either L-glutamine or ammonia as the source of nitrogen. Regulates intracellular CTP levels through interactions with the four ribonucleotide triphosphates. In Pasteurella multocida (strain Pm70), this protein is CTP synthase.